Consider the following 97-residue polypeptide: Nucleoid-associated protein HP_0035 (97 aa).

The protein belongs to the YbaB/EbfC family. Homodimer.

It localises to the cytoplasm. The protein resides in the nucleoid. Its function is as follows. Binds to DNA and alters its conformation. May be involved in regulation of gene expression, nucleoid organization and DNA protection. This is Nucleoid-associated protein HP_0035 from Helicobacter pylori (strain ATCC 700392 / 26695) (Campylobacter pylori).